The primary structure comprises 267 residues: Glutamate racemase (267 aa).

Substrate is bound by residues aspartate 9–serine 10 and tyrosine 41–glycine 42. Catalysis depends on cysteine 72, which acts as the Proton donor/acceptor. Asparagine 73 to threonine 74 is a binding site for substrate. Cysteine 184 (proton donor/acceptor) is an active-site residue. Position 185–186 (threonine 185–histidine 186) interacts with substrate.

This sequence belongs to the aspartate/glutamate racemases family.

It catalyses the reaction L-glutamate = D-glutamate. The protein operates within cell wall biogenesis; peptidoglycan biosynthesis. Provides the (R)-glutamate required for cell wall biosynthesis. The polypeptide is Glutamate racemase (Staphylococcus epidermidis (strain ATCC 12228 / FDA PCI 1200)).